We begin with the raw amino-acid sequence, 469 residues long: UDP-N-acetylmuramate--L-alanine ligase (469 aa).

113 to 119 contributes to the ATP binding site; that stretch reads GTHGKTT.

Belongs to the MurCDEF family.

The protein resides in the cytoplasm. The enzyme catalyses UDP-N-acetyl-alpha-D-muramate + L-alanine + ATP = UDP-N-acetyl-alpha-D-muramoyl-L-alanine + ADP + phosphate + H(+). Its pathway is cell wall biogenesis; peptidoglycan biosynthesis. Its function is as follows. Cell wall formation. The chain is UDP-N-acetylmuramate--L-alanine ligase from Neisseria gonorrhoeae (strain ATCC 700825 / FA 1090).